A 157-amino-acid polypeptide reads, in one-letter code: CASP-like protein 1 (157 aa).

Topologically, residues 1-13 are cytoplasmic; that stretch reads MKTEARDGGSEWR. The chain crosses the membrane as a helical span at residues 14–34; that stretch reads WVAIFELFLRLAAIVSTSVAV. The Extracellular portion of the chain corresponds to 35–40; the sequence is YAAMGK. Residues 41–61 form a helical membrane-spanning segment; the sequence is IFVVAVNGVACFYLLMSLPVS. Topologically, residues 62 to 82 are cytoplasmic; that stretch reads IFNIMRPHAYPANRVFLNIMD. Residues 83-103 form a helical membrane-spanning segment; sequence MVMVALVTAGALAAGIVYLVE. Topologically, residues 104–121 are extracellular; sequence KAGNARASWVSVWSQFDS. The helical transmembrane segment at 122–142 threads the bilayer; the sequence is SSCFAVLALILHVLLSGVILY. Over 143-157 the chain is Cytoplasmic; the sequence is KQALNIKFKKLDSVD.

The protein belongs to the Casparian strip membrane proteins (CASP) family. In terms of assembly, homodimer and heterodimers.

It localises to the cell membrane. In Picea sitchensis (Sitka spruce), this protein is CASP-like protein 1.